A 609-amino-acid polypeptide reads, in one-letter code: Glutamine--fructose-6-phosphate aminotransferase [isomerizing] (609 aa).

The Nucleophile; for GATase activity role is filled by cysteine 2. In terms of domain architecture, Glutamine amidotransferase type-2 spans cysteine 2–aspartate 219. SIS domains are found at residues serine 285–threonine 424 and leucine 458–proline 599. Residue lysine 604 is the For Fru-6P isomerization activity of the active site.

As to quaternary structure, homodimer.

It localises to the cytoplasm. The catalysed reaction is D-fructose 6-phosphate + L-glutamine = D-glucosamine 6-phosphate + L-glutamate. Its function is as follows. Catalyzes the first step in hexosamine metabolism, converting fructose-6P into glucosamine-6P using glutamine as a nitrogen source. In Gloeobacter violaceus (strain ATCC 29082 / PCC 7421), this protein is Glutamine--fructose-6-phosphate aminotransferase [isomerizing].